A 380-amino-acid chain; its full sequence is Cytochrome b (380 aa).

4 consecutive transmembrane segments (helical) span residues 33 to 53 (FGSL…FLAM), 77 to 98 (WLIR…YLHI), 113 to 133 (WNIG…GYVL), and 178 to 198 (FFAF…LHFF). Heme b contacts are provided by His-83 and His-97. Heme b-binding residues include His-182 and His-196. His-201 is a binding site for a ubiquinone. The next 4 helical transmembrane spans lie at 226-246 (YKDL…SFFS), 288-308 (LGGV…PILH), 320-340 (LTQL…WIGG), and 347-367 (FIAV…ILIP).

The protein belongs to the cytochrome b family. In terms of assembly, the cytochrome bc1 complex contains 3 respiratory subunits (MT-CYB, CYC1 and UQCRFS1), 2 core proteins (UQCRC1 and UQCRC2) and probably 6 low-molecular weight proteins. Heme b serves as cofactor.

It is found in the mitochondrion inner membrane. Its function is as follows. Component of the ubiquinol-cytochrome c reductase complex (complex III or cytochrome b-c1 complex) that is part of the mitochondrial respiratory chain. The b-c1 complex mediates electron transfer from ubiquinol to cytochrome c. Contributes to the generation of a proton gradient across the mitochondrial membrane that is then used for ATP synthesis. The sequence is that of Cytochrome b (mt-cyb) from Zenopsis nebulosa (Mirror dory).